The primary structure comprises 246 residues: 3-deoxy-manno-octulosonate cytidylyltransferase (246 aa).

It belongs to the KdsB family.

It localises to the cytoplasm. The enzyme catalyses 3-deoxy-alpha-D-manno-oct-2-ulosonate + CTP = CMP-3-deoxy-beta-D-manno-octulosonate + diphosphate. It participates in nucleotide-sugar biosynthesis; CMP-3-deoxy-D-manno-octulosonate biosynthesis; CMP-3-deoxy-D-manno-octulosonate from 3-deoxy-D-manno-octulosonate and CTP: step 1/1. It functions in the pathway bacterial outer membrane biogenesis; lipopolysaccharide biosynthesis. Activates KDO (a required 8-carbon sugar) for incorporation into bacterial lipopolysaccharide in Gram-negative bacteria. In Leptospira borgpetersenii serovar Hardjo-bovis (strain JB197), this protein is 3-deoxy-manno-octulosonate cytidylyltransferase.